A 242-amino-acid chain; its full sequence is MAGHSKWANIKHKKAAADAKRGKVWTRLIKEIQVAARMGGGDIDSNPRLRLAVEKAYDANMPKDNVNRAIQRGVGGVDGASYEEIRYEGYGIGGAAVIVDTMTDNRTRTVAEVRHAFSKNGGNMGTDGSVSFMFDHVGQFLFAPGTAEDKLMEAALEAGADDVVTNDDGSIEVLCPPNDFPKVKSALEAAGFKAELAEVTMKPQTEVEFTGEDAVKMQKLLDALENLDDVQEVYTNAAIADE.

Belongs to the TACO1 family.

It localises to the cytoplasm. The protein is Probable transcriptional regulatory protein Bphyt_1301 of Paraburkholderia phytofirmans (strain DSM 17436 / LMG 22146 / PsJN) (Burkholderia phytofirmans).